Here is a 341-residue protein sequence, read N- to C-terminus: S-adenosylmethionine:tRNA ribosyltransferase-isomerase (341 aa).

It belongs to the QueA family. Monomer.

It localises to the cytoplasm. The enzyme catalyses 7-aminomethyl-7-carbaguanosine(34) in tRNA + S-adenosyl-L-methionine = epoxyqueuosine(34) in tRNA + adenine + L-methionine + 2 H(+). It functions in the pathway tRNA modification; tRNA-queuosine biosynthesis. In terms of biological role, transfers and isomerizes the ribose moiety from AdoMet to the 7-aminomethyl group of 7-deazaguanine (preQ1-tRNA) to give epoxyqueuosine (oQ-tRNA). This chain is S-adenosylmethionine:tRNA ribosyltransferase-isomerase, found in Clostridium botulinum (strain Kyoto / Type A2).